Consider the following 487-residue polypeptide: L-tartrate/succinate antiporter (487 aa).

The next 14 membrane-spanning stretches (helical) occupy residues 10-30 (YLAP…AGLE), 33-53 (TWLY…EPVP), 54-74 (GAVV…WLLF), 93-113 (WAVS…FMFG), 137-157 (TLFL…VTPS), 189-209 (IGSY…AIFL), 236-256 (FLGM…LAYV), 292-312 (LMVG…AAMV), 313-333 (GYSV…DIVS), 340-360 (VFFW…TGFI), 370-390 (SLSG…FYLL), 393-413 (FFAS…AAAL), 418-438 (IPLP…SILT), and 465-485 (IFGL…MPVV).

This sequence belongs to the SLC13A/DASS transporter (TC 2.A.47) family. DIT1 subfamily.

It is found in the cell inner membrane. It catalyses the reaction (2R,3R)-tartrate(out) + succinate(in) = (2R,3R)-tartrate(in) + succinate(out). Functionally, catalyzes the uptake of tartrate in exchange for intracellular succinate. Essential for anaerobic L-tartrate fermentation. This chain is L-tartrate/succinate antiporter (ttdT), found in Escherichia coli O6:K15:H31 (strain 536 / UPEC).